Reading from the N-terminus, the 62-residue chain is MKAFYGILIILLFCSMFKLNESTTINVKCTSPKQCLKPCKDLYGPHAGAKCMNGKCKCYNNG.

The N-terminal stretch at 1-22 (MKAFYGILIILLFCSMFKLNES) is a signal peptide. 3 disulfide bridges follow: C29-C51, C35-C56, and C39-C58. The residue at position 61 (N61) is an Asparagine amide.

It belongs to the short scorpion toxin superfamily. Potassium channel inhibitor family. Alpha-KTx 02 subfamily. Expressed by the venom gland.

Its subcellular location is the secreted. Blocks voltage-gated potassium channels. This Centruroides tecomanus (Scorpion) protein is Toxin Ct28.